The following is a 1155-amino-acid chain: DNA-directed RNA polymerase subunit beta (1155 aa).

This sequence belongs to the RNA polymerase beta chain family. As to quaternary structure, the RNAP catalytic core consists of 2 alpha, 1 beta, 1 beta' and 1 omega subunit. When a sigma factor is associated with the core the holoenzyme is formed, which can initiate transcription.

The enzyme catalyses RNA(n) + a ribonucleoside 5'-triphosphate = RNA(n+1) + diphosphate. DNA-dependent RNA polymerase catalyzes the transcription of DNA into RNA using the four ribonucleoside triphosphates as substrates. This is DNA-directed RNA polymerase subunit beta from Borreliella afzelii (strain PKo) (Borrelia afzelii).